The primary structure comprises 638 residues: Threonine--tRNA ligase (638 aa).

Residues 1–62 (MYQLTLPDKS…EKNSNIEVLT (62 aa)) enclose the TGS domain. Positions 246-537 (DHRKIGKEMD…LIEHYEGKFP (292 aa)) are catalytic. Zn(2+)-binding residues include Cys-337, His-388, and His-514.

The protein belongs to the class-II aminoacyl-tRNA synthetase family. Homodimer. Zn(2+) is required as a cofactor.

Its subcellular location is the cytoplasm. The catalysed reaction is tRNA(Thr) + L-threonine + ATP = L-threonyl-tRNA(Thr) + AMP + diphosphate + H(+). Functionally, catalyzes the attachment of threonine to tRNA(Thr) in a two-step reaction: L-threonine is first activated by ATP to form Thr-AMP and then transferred to the acceptor end of tRNA(Thr). Also edits incorrectly charged L-seryl-tRNA(Thr). The polypeptide is Threonine--tRNA ligase (Leptospira interrogans serogroup Icterohaemorrhagiae serovar copenhageni (strain Fiocruz L1-130)).